A 230-amino-acid polypeptide reads, in one-letter code: Ribonuclease 3 (230 aa).

Residues 1-134 form the RNase III domain; that stretch reads MKQLEELLST…FLGALLLDKG (134 aa). Glutamate 47 is a Mg(2+) binding site. Residue aspartate 51 is part of the active site. The Mg(2+) site is built by aspartate 120 and glutamate 123. The active site involves glutamate 123. The DRBM domain maps to 160–229; it reads DYKTCLQEFL…AKNALAQLSE (70 aa).

This sequence belongs to the ribonuclease III family. As to quaternary structure, homodimer. It depends on Mg(2+) as a cofactor.

Its subcellular location is the cytoplasm. The enzyme catalyses Endonucleolytic cleavage to 5'-phosphomonoester.. In terms of biological role, digests double-stranded RNA. Involved in the processing of primary rRNA transcript to yield the immediate precursors to the large and small rRNAs (23S and 16S). Processes some mRNAs, and tRNAs when they are encoded in the rRNA operon. Processes pre-crRNA and tracrRNA of type II CRISPR loci if present in the organism. This is Ribonuclease 3 from Streptococcus pyogenes serotype M28 (strain MGAS6180).